The primary structure comprises 261 residues: Thiazole synthase (261 aa).

The active-site Schiff-base intermediate with DXP is the lysine 102. Residues glycine 163, 189-190, and 211-212 contribute to the 1-deoxy-D-xylulose 5-phosphate site; these read AG and NT.

Belongs to the ThiG family. Homotetramer. Forms heterodimers with either ThiH or ThiS.

The protein localises to the cytoplasm. The catalysed reaction is [ThiS sulfur-carrier protein]-C-terminal-Gly-aminoethanethioate + 2-iminoacetate + 1-deoxy-D-xylulose 5-phosphate = [ThiS sulfur-carrier protein]-C-terminal Gly-Gly + 2-[(2R,5Z)-2-carboxy-4-methylthiazol-5(2H)-ylidene]ethyl phosphate + 2 H2O + H(+). Its pathway is cofactor biosynthesis; thiamine diphosphate biosynthesis. Catalyzes the rearrangement of 1-deoxy-D-xylulose 5-phosphate (DXP) to produce the thiazole phosphate moiety of thiamine. Sulfur is provided by the thiocarboxylate moiety of the carrier protein ThiS. In vitro, sulfur can be provided by H(2)S. This chain is Thiazole synthase, found in Acinetobacter baylyi (strain ATCC 33305 / BD413 / ADP1).